The chain runs to 154 residues: Fibroblast growth factor 2 (154 aa).

The propeptide occupies 1–9 (MAAGSITSL). The tract at residues 1–20 (MAAGSITSLPALPEDGGGAF) is disordered. Position 35 (N35) interacts with heparin. A Phosphotyrosine; by TEC modification is found at Y81. K94 participates in a covalent cross-link: Glycyl lysine isopeptide (Lys-Gly) (interchain with G-Cter in SUMO1). Residues 127–143 (KRTGQYKLGSKTGPGQK) are heparin-binding.

Belongs to the heparin-binding growth factors family. In terms of assembly, monomer. Homodimer. Interacts with FGFR1, FGFR2, FGFR3 and FGFR4. Affinity between fibroblast growth factors (FGFs) and their receptors is increased by heparan sulfate glycosaminoglycans that function as coreceptors. Interacts with CSPG4, FGFBP1 and TEC. Found in a complex with FGFBP1, FGF1 and FGF2. Interacts with FGFBP3. Interacts with integrin ITGAV:ITGB3; the interaction is required for FGF2 signaling. Interacts with SNORC (via the extracellular domain). Interacts with GPC3. In terms of processing, phosphorylation at Tyr-81 regulates FGF2 unconventional secretion. In terms of tissue distribution, found in all tissues examined.

The protein localises to the secreted. The protein resides in the nucleus. In terms of biological role, acts as a ligand for FGFR1, FGFR2, FGFR3 and FGFR4. Also acts as an integrin ligand which is required for FGF2 signaling. Binds to integrin ITGAV:ITGB3. Plays an important role in the regulation of cell survival, cell division, cell differentiation and cell migration. Functions as a potent mitogen in vitro. Can induce angiogenesis. Mediates phosphorylation of ERK1/2 and thereby promotes retinal lens fiber differentiation. This is Fibroblast growth factor 2 (Fgf2) from Rattus norvegicus (Rat).